Here is a 180-residue protein sequence, read N- to C-terminus: SAGA-associated factor 11 homolog (180 aa).

Residues 98-119 (CSCPNCNRIVAASRFAPHLEKC) form an SGF11-type zinc finger. Residues 138–180 (RDGGNYFGADEDDEDDADWSGEKRKKKIAPVRTNGSKKNGKTS) form a disordered region. The segment covering 146-156 (ADEDDEDDADW) has biased composition (acidic residues).

The protein belongs to the SGF11 family. In terms of assembly, component of some SAGA transcription coactivator-HAT complexes. Within the SAGA complex, participates in a subcomplex of SAGA called the DUB module (deubiquitination module).

Its subcellular location is the nucleus. In terms of biological role, component of the transcription regulatory histone acetylation (HAT) complex SAGA, a multiprotein complex that activates transcription by remodeling chromatin and mediating histone acetylation and deubiquitination. Within the SAGA complex, participates in a subcomplex that specifically deubiquitinates histone H2B. The SAGA complex is recruited to specific gene promoters by activators, where it is required for transcription. This chain is SAGA-associated factor 11 homolog, found in Aedes aegypti (Yellowfever mosquito).